Reading from the N-terminus, the 137-residue chain is MAESTFMLEVVTPERILYRDEIQFMVAPGIEGELGIMKNHAPLVAALNIGVLRYQTSTGVDKRMAISGGFMEVIDNGTRVLAETAEHGSEIDVLRAKAAKERAEKRLEVRSEEINHARAKMALQRAIARIRASEKPL.

This sequence belongs to the ATPase epsilon chain family. As to quaternary structure, F-type ATPases have 2 components, CF(1) - the catalytic core - and CF(0) - the membrane proton channel. CF(1) has five subunits: alpha(3), beta(3), gamma(1), delta(1), epsilon(1). CF(0) has three main subunits: a, b and c.

Its subcellular location is the cell membrane. In terms of biological role, produces ATP from ADP in the presence of a proton gradient across the membrane. This is ATP synthase epsilon chain from Syntrophomonas wolfei subsp. wolfei (strain DSM 2245B / Goettingen).